Reading from the N-terminus, the 179-residue chain is Large ribosomal subunit protein uL5 (179 aa).

It belongs to the universal ribosomal protein uL5 family. In terms of assembly, part of the 50S ribosomal subunit; part of the 5S rRNA/L5/L18/L25 subcomplex. Contacts the 5S rRNA and the P site tRNA. Forms a bridge to the 30S subunit in the 70S ribosome.

In terms of biological role, this is one of the proteins that bind and probably mediate the attachment of the 5S RNA into the large ribosomal subunit, where it forms part of the central protuberance. In the 70S ribosome it contacts protein S13 of the 30S subunit (bridge B1b), connecting the 2 subunits; this bridge is implicated in subunit movement. Contacts the P site tRNA; the 5S rRNA and some of its associated proteins might help stabilize positioning of ribosome-bound tRNAs. This chain is Large ribosomal subunit protein uL5, found in Marinobacter nauticus (strain ATCC 700491 / DSM 11845 / VT8) (Marinobacter aquaeolei).